A 191-amino-acid polypeptide reads, in one-letter code: Classical arabinogalactan protein 9 (191 aa).

Residues 1-20 (MARSFAIAVICIVLIAGVTG) form the signal peptide. A disordered region spans residues 20–172 (GQAPTSPPTA…SPTDVNDQNG (153 aa)). A Pyrrolidone carboxylic acid modification is found at Gln21. Residues Pro23, Pro26, Pro27, Pro31, and Pro33 each carry the 4-hydroxyproline modification. A compositionally biased stretch (pro residues) spans 24 to 146 (TSPPTATPAP…PSPSSSPPLP (123 aa)). O-linked (Ara...) hydroxyproline glycans are attached at residues Pro26, Pro27, Pro31, and Pro33. Residues 155–172 (TDSISPAPSPTDVNDQNG) show a composition bias toward polar residues. Gly172 is lipidated: GPI-anchor amidated glycine. Residues 173–191 (ASKMVSSLVFGSVLVWFMI) constitute a propeptide, removed in mature form.

This sequence belongs to the classical AGP family. Post-translationally, O-glycosylated on hydroxyprolines; noncontiguous hydroxylproline residues are glycosylated with arabinogalactan. In terms of tissue distribution, predominantly expressed in flowers and at a lower level in leaves and siliques.

The protein resides in the cell membrane. Proteoglycan that seems to be implicated in diverse developmental roles such as differentiation, cell-cell recognition, embryogenesis and programmed cell death. The protein is Classical arabinogalactan protein 9 (AGP9) of Arabidopsis thaliana (Mouse-ear cress).